The sequence spans 651 residues: MAARQIKDGEYTATIYKLIKEARYGEAIQILSNELQKQYRSRAGLSLLGYCYYQIQDFVNAADCYEQLIQITPEVEEYKLYYAQSLYKACMYPEAMKATFALDSSAYQSKMLKLQASIRYGEEDISGAKSLVEQMPSEDPESEINMGCLLYKEGHYEEACKKFITAMQVMGYKQDLSYNIALCYYSMKQYAPALKHIADIIERGIREHPELGVGMTTEGIEVRSVGNTLVLHETALIEAFNLKAAIEYQLKNYEAAQEALTDMPPRSEEELDPVTLHNQALMNMDTKPTEGFEKLQFLLQQNPFPPETFGNLLLLYCKYEYFDLAADVLAENAHLTYKFLTPYLYDFLDAMITCQTAPEEAFFKLDELAGMLTEQMRKLTKQVQEARHNRDDEAVKKAVNEYDETLEKYIPVLMAQAKIYWNMENYQMVEKIFRKSVEFCNEHDIWKLNVAHVLFMQDNKYKEAIGFYEPIVKKHYDNILNVSAAVLANLCVSYIMTSQNEEAEELMRKIEKEEEQIAYENPDKKIYHLCIVNLVIGTLYCAKGNYEFGISRVIKSLEPYNKKLGTDTWYHAKRCFLSLLENMSKHMIMLRDDVIAECLQFLEHCEIYGRNIPAVIEQPLEEERMHIGKNTVTYESRQLKALLYEITSWNL.

TPR repeat units follow at residues 8 to 41 (DGEYTATIYKLIKEARYGEAIQILSNELQKQYRS), 42 to 75 (RAGLSLLGYCYYQIQDFVNAADCYEQLIQITPEV), 140 to 173 (PESEINMGCLLYKEGHYEEACKKFITAMQVMGYK), 175 to 207 (DLSYNIALCYYSMKQYAPALKHIADIIERGIRE), 372 to 405 (LTEQMRKLTKQVQEARHNRDDEAVKKAVNEYDET), 410 to 443 (IPVLMAQAKIYWNMENYQMVEKIFRKSVEFCNEH), and 445 to 478 (IWKLNVAHVLFMQDNKYKEAIGFYEPIVKKHYDN). A coiled-coil region spans residues 494-521 (YIMTSQNEEAEELMRKIEKEEEQIAYEN). A TPR 8 repeat occupies 530-563 (CIVNLVIGTLYCAKGNYEFGISRVIKSLEPYNKK).

The protein belongs to the TTC30/dfy-1/fleer family.

The protein localises to the cell projection. The protein resides in the cilium. Required for polyglutamylation of axonemal tubulin. Plays a role in anterograde intraflagellar transport (IFT), the process by which cilia precursors are transported from the base of the cilium to the site of their incorporation at the tip. This is Intraflagellar transport protein 70A (ift70a) from Xenopus tropicalis (Western clawed frog).